The primary structure comprises 126 residues: Glycine cleavage system H protein (126 aa).

A Lipoyl-binding domain is found at Val22–Glu104. Residue Lys63 is modified to N6-lipoyllysine.

This sequence belongs to the GcvH family. In terms of assembly, the glycine cleavage system is composed of four proteins: P, T, L and H. (R)-lipoate is required as a cofactor.

Functionally, the glycine cleavage system catalyzes the degradation of glycine. The H protein shuttles the methylamine group of glycine from the P protein to the T protein. Its function is as follows. Is also involved in protein lipoylation via its role as an octanoyl/lipoyl carrier protein intermediate. The sequence is that of Glycine cleavage system H protein from Staphylococcus epidermidis (strain ATCC 35984 / DSM 28319 / BCRC 17069 / CCUG 31568 / BM 3577 / RP62A).